The following is a 119-amino-acid chain: Small ribosomal subunit protein bS16 (119 aa).

Residues 89 to 103 show a composition bias toward basic and acidic residues; the sequence is TTKSTKEKAATDKKA. Residues 89–119 form a disordered region; the sequence is TTKSTKEKAATDKKAKVTKKPKTKTTTDVKK.

The protein belongs to the bacterial ribosomal protein bS16 family.

This Spiroplasma kunkelii protein is Small ribosomal subunit protein bS16.